Here is a 69-residue protein sequence, read N- to C-terminus: uncharacterized protein (69 aa).

This is an uncharacterized protein from Mycobacterium bovis (strain ATCC BAA-935 / AF2122/97).